A 49-amino-acid chain; its full sequence is SPbeta prophage-derived uncharacterized protein YorN (49 aa).

This Bacillus subtilis (strain 168) protein is SPbeta prophage-derived uncharacterized protein YorN (yorN).